Reading from the N-terminus, the 540-residue chain is Putative cysteine ligase BshC (540 aa).

The stretch at 425 to 453 (IEKVEGMIEQQRRLNKDLLDEVAGNQNNI) forms a coiled coil.

It belongs to the BshC family.

In terms of biological role, involved in bacillithiol (BSH) biosynthesis. May catalyze the last step of the pathway, the addition of cysteine to glucosamine malate (GlcN-Mal) to generate BSH. In Staphylococcus aureus (strain NCTC 8325 / PS 47), this protein is Putative cysteine ligase BshC.